Here is a 47-residue protein sequence, read N- to C-terminus: Photosystem II reaction center protein Psb30 (47 aa).

Residues 19–39 (VIFQLLSVALIVIAGPVVIFL) form a helical membrane-spanning segment.

Belongs to the Psb30/Ycf12 family. In terms of assembly, PSII is composed of 1 copy each of membrane proteins PsbA, PsbB, PsbC, PsbD, PsbE, PsbF, PsbH, PsbI, PsbJ, PsbK, PsbL, PsbM, PsbT, PsbX, PsbY, PsbZ, Psb30/Ycf12, peripheral proteins PsbO, CyanoQ (PsbQ), PsbU, PsbV and a large number of cofactors. It forms dimeric complexes.

The protein resides in the cellular thylakoid membrane. In terms of biological role, a core subunit of photosystem II (PSII), probably helps stabilize the reaction center. The chain is Photosystem II reaction center protein Psb30 from Nostoc punctiforme (strain ATCC 29133 / PCC 73102).